A 112-amino-acid polypeptide reads, in one-letter code: Nitrogenase-stabilizing/protective protein NifW (112 aa).

Belongs to the NifW family. Homotrimer; associates with NifD.

Functionally, may protect the nitrogenase Fe-Mo protein from oxidative damage. This is Nitrogenase-stabilizing/protective protein NifW from Rhodopseudomonas palustris (strain BisA53).